A 337-amino-acid chain; its full sequence is Ornithine carbamoyltransferase, catabolic (337 aa).

Residues 57–60 (STRT), Gln-84, Arg-108, and 135–138 (HPTQ) contribute to the carbamoyl phosphate site. Residues Asn-167, Asp-231, and 235–236 (SM) contribute to the L-ornithine site. Carbamoyl phosphate-binding positions include 272–273 (CL) and Arg-317.

The protein belongs to the aspartate/ornithine carbamoyltransferase superfamily. OTCase family.

The protein resides in the cytoplasm. It catalyses the reaction carbamoyl phosphate + L-ornithine = L-citrulline + phosphate + H(+). It functions in the pathway amino-acid degradation; L-arginine degradation via ADI pathway; carbamoyl phosphate from L-arginine: step 2/2. Its function is as follows. Reversibly catalyzes the transfer of the carbamoyl group from carbamoyl phosphate (CP) to the N(epsilon) atom of ornithine (ORN) to produce L-citrulline. This is Ornithine carbamoyltransferase, catabolic from Streptococcus suis (strain 89/1591).